The chain runs to 359 residues: 3-dehydroquinate synthase (359 aa).

NAD(+) is bound by residues 71–76, 105–109, 129–130, lysine 142, and lysine 151; these read DGEAYK, GVIGD, and TT. The Zn(2+) site is built by glutamate 184, histidine 247, and histidine 264.

This sequence belongs to the sugar phosphate cyclases superfamily. Dehydroquinate synthase family. Co(2+) serves as cofactor. Requires Zn(2+) as cofactor. It depends on NAD(+) as a cofactor.

The protein localises to the cytoplasm. The enzyme catalyses 7-phospho-2-dehydro-3-deoxy-D-arabino-heptonate = 3-dehydroquinate + phosphate. It functions in the pathway metabolic intermediate biosynthesis; chorismate biosynthesis; chorismate from D-erythrose 4-phosphate and phosphoenolpyruvate: step 2/7. In terms of biological role, catalyzes the conversion of 3-deoxy-D-arabino-heptulosonate 7-phosphate (DAHP) to dehydroquinate (DHQ). In Burkholderia vietnamiensis (strain G4 / LMG 22486) (Burkholderia cepacia (strain R1808)), this protein is 3-dehydroquinate synthase.